A 383-amino-acid polypeptide reads, in one-letter code: Aurachin C monooxygenase/isomerase (383 aa).

Residues Gly15, Ser47, Val128, Asp285, and 295-299 (GQGGC) each bind FAD.

It depends on FAD as a cofactor.

The catalysed reaction is aurachin C + NADH + O2 + H(+) = 4-hydroxy-2-methyl-3-oxo-4-[(2E,6E)-farnesyl]-3,4-dihydroquinoline 1-oxide + NAD(+) + H2O. The enzyme catalyses aurachin C + NADPH + O2 + H(+) = 4-hydroxy-2-methyl-3-oxo-4-[(2E,6E)-farnesyl]-3,4-dihydroquinoline 1-oxide + NADP(+) + H2O. It carries out the reaction aurachin C + NADH + O2 + H(+) = aurachin C epoxide + NAD(+) + H2O. It catalyses the reaction aurachin C + NADPH + O2 + H(+) = aurachin C epoxide + NADP(+) + H2O. The catalysed reaction is aurachin C epoxide = 2-hydroxy-1a-methyl-7a-[(2E,6E)-farnesyl]-1a,2-dihydrooxireno[2,3-b]quinolin-7(7aH)-one. The enzyme catalyses 2-hydroxy-1a-methyl-7a-[(2E,6E)-farnesyl]-1a,2-dihydrooxireno[2,3-b]quinolin-7(7aH)-one = 4-hydroxy-2-methyl-3-oxo-4-[(2E,6E)-farnesyl]-3,4-dihydroquinoline 1-oxide. Catalyzes the initial step in the conversion of aurachin C to aurachin B. Catalyzes the epoxidation of the C(2)-C(3) double bond of aurachin C, which is followed by a semipinacol rearrangement, causing migration of the farnesyl group from C(3) to C(4). Accepts both NADH and NADPH, but has a preference for NADH. The polypeptide is Aurachin C monooxygenase/isomerase (Stigmatella aurantiaca).